Here is a 505-residue protein sequence, read N- to C-terminus: Cytochrome P450 4Z1 (505 aa).

The Cytoplasmic segment spans residues 1–9 (MEPSWLQEL). The helical; Signal-anchor for type II membrane protein transmembrane segment at 10–30 (MAHPFLLLILLCMSLLLFQVI) threads the bilayer. Over 31 to 505 (RLYQRRRWMI…GIHVFAKKVC (475 aa)) the chain is Lumenal. C452 is a heme binding site.

This sequence belongs to the cytochrome P450 family. It depends on heme as a cofactor. In terms of tissue distribution, preferentially detected in breast carcinoma tissue and mammary gland, whereas only marginal expression is found in all other tested tissues.

It localises to the endoplasmic reticulum membrane. The protein localises to the microsome membrane. It catalyses the reaction an organic molecule + reduced [NADPH--hemoprotein reductase] + O2 = an alcohol + oxidized [NADPH--hemoprotein reductase] + H2O + H(+). The enzyme catalyses dodecanoate + reduced [NADPH--hemoprotein reductase] + O2 = 7-hydroxydodecanoate + oxidized [NADPH--hemoprotein reductase] + H2O + H(+). It carries out the reaction dodecanoate + reduced [NADPH--hemoprotein reductase] + O2 = 8-hydroxydodecanoate + oxidized [NADPH--hemoprotein reductase] + H2O + H(+). The catalysed reaction is dodecanoate + reduced [NADPH--hemoprotein reductase] + O2 = 9-hydroxydodecanoate + oxidized [NADPH--hemoprotein reductase] + H2O + H(+). It catalyses the reaction dodecanoate + reduced [NADPH--hemoprotein reductase] + O2 = 10-hydroxydodecanoate + oxidized [NADPH--hemoprotein reductase] + H2O + H(+). The enzyme catalyses dodecanoate + reduced [NADPH--hemoprotein reductase] + O2 = 11-hydroxydodecanoate + oxidized [NADPH--hemoprotein reductase] + H2O + H(+). It carries out the reaction tetradecanoate + reduced [NADPH--hemoprotein reductase] + O2 = 9-hydroxytetradecanoate + oxidized [NADPH--hemoprotein reductase] + H2O + H(+). The catalysed reaction is tetradecanoate + reduced [NADPH--hemoprotein reductase] + O2 = 10-hydroxytetradecanoate + oxidized [NADPH--hemoprotein reductase] + H2O + H(+). It catalyses the reaction tetradecanoate + reduced [NADPH--hemoprotein reductase] + O2 = 11-hydroxytetradecanoate + oxidized [NADPH--hemoprotein reductase] + H2O + H(+). The enzyme catalyses tetradecanoate + reduced [NADPH--hemoprotein reductase] + O2 = 12-hydroxytetradecanoate + oxidized [NADPH--hemoprotein reductase] + H2O + H(+). It carries out the reaction (5Z,8Z,11Z,14Z)-eicosatetraenoate + reduced [NADPH--hemoprotein reductase] + O2 = (14S,15R)-epoxy-(5Z,8Z,11Z)-eicosatrienoate + oxidized [NADPH--hemoprotein reductase] + H2O + H(+). Functionally, a cytochrome P450 monooxygenase that catalyzes the in-chain oxidation of fatty acids. Catalyzes the hydroxylation of carbon-hydrogen bonds. Hydroxylates lauric and myristic acids predominantly at the omega-4 and omega-2 positions, respectively. Catalyzes the epoxidation of double bonds of polyunsaturated fatty acids (PUFA). Displays an absolute stereoselectivity in the epoxidation of arachidonic acid producing the 14(S),15(R)-epoxyeicosatrienoic acid (EET) enantiomer. Mechanistically, uses molecular oxygen inserting one oxygen atom into a substrate, and reducing the second into a water molecule, with two electrons provided by NADPH via cytochrome P450 reductase (CPR; NADPH-ferrihemoprotein reductase). This Homo sapiens (Human) protein is Cytochrome P450 4Z1.